The sequence spans 193 residues: Orotate phosphoribosyltransferase (193 aa).

5-phospho-alpha-D-ribose 1-diphosphate-binding positions include R85, K89, H91, and 111–119 (DDVLTTGKS). Residues T115 and R143 each coordinate orotate.

This sequence belongs to the purine/pyrimidine phosphoribosyltransferase family. PyrE subfamily. Homodimer. It depends on Mg(2+) as a cofactor.

It catalyses the reaction orotidine 5'-phosphate + diphosphate = orotate + 5-phospho-alpha-D-ribose 1-diphosphate. It participates in pyrimidine metabolism; UMP biosynthesis via de novo pathway; UMP from orotate: step 1/2. Functionally, catalyzes the transfer of a ribosyl phosphate group from 5-phosphoribose 1-diphosphate to orotate, leading to the formation of orotidine monophosphate (OMP). In Pyrobaculum islandicum (strain DSM 4184 / JCM 9189 / GEO3), this protein is Orotate phosphoribosyltransferase.